The sequence spans 55 residues: MKIFFAVLVILVLFSMLIWTAYGAPYPVNCKTDRDCVMCGLGISCKNGYCQSCTR.

The N-terminal stretch at Met-1–Gly-23 is a signal peptide. Disulfide bonds link Cys-30–Cys-45, Cys-36–Cys-50, and Cys-39–Cys-53.

In terms of tissue distribution, expressed by the venom gland.

The protein localises to the secreted. The protein is Neurotoxin BmKX-A1-S31 of Olivierus martensii (Manchurian scorpion).